We begin with the raw amino-acid sequence, 273 residues long: 4-hydroxy-tetrahydrodipicolinate reductase (273 aa).

Residues 8-13, Glu-34, 102-104, and 128-131 contribute to the NAD(+) site; these read GCAGNM, GTT, and SPNM. His-161 acts as the Proton donor/acceptor in catalysis. Residue His-162 coordinates (S)-2,3,4,5-tetrahydrodipicolinate. The active-site Proton donor is the Lys-165. 171 to 172 contacts (S)-2,3,4,5-tetrahydrodipicolinate; the sequence is GT.

Belongs to the DapB family.

The protein localises to the cytoplasm. It carries out the reaction (S)-2,3,4,5-tetrahydrodipicolinate + NAD(+) + H2O = (2S,4S)-4-hydroxy-2,3,4,5-tetrahydrodipicolinate + NADH + H(+). The enzyme catalyses (S)-2,3,4,5-tetrahydrodipicolinate + NADP(+) + H2O = (2S,4S)-4-hydroxy-2,3,4,5-tetrahydrodipicolinate + NADPH + H(+). Its pathway is amino-acid biosynthesis; L-lysine biosynthesis via DAP pathway; (S)-tetrahydrodipicolinate from L-aspartate: step 4/4. In terms of biological role, catalyzes the conversion of 4-hydroxy-tetrahydrodipicolinate (HTPA) to tetrahydrodipicolinate. This Methanosphaera stadtmanae (strain ATCC 43021 / DSM 3091 / JCM 11832 / MCB-3) protein is 4-hydroxy-tetrahydrodipicolinate reductase.